The sequence spans 231 residues: Endonuclease NucS (231 aa).

The protein belongs to the NucS endonuclease family.

The protein localises to the cytoplasm. Its function is as follows. Cleaves both 3' and 5' ssDNA extremities of branched DNA structures. The protein is Endonuclease NucS of Micrococcus luteus (strain ATCC 4698 / DSM 20030 / JCM 1464 / CCM 169 / CCUG 5858 / IAM 1056 / NBRC 3333 / NCIMB 9278 / NCTC 2665 / VKM Ac-2230) (Micrococcus lysodeikticus).